A 433-amino-acid chain; its full sequence is Tol-Pal system protein TolB (433 aa).

A signal peptide spans 1 to 21 (MRNLLRGMLVVICCMAGIAAA).

This sequence belongs to the TolB family. In terms of assembly, the Tol-Pal system is composed of five core proteins: the inner membrane proteins TolA, TolQ and TolR, the periplasmic protein TolB and the outer membrane protein Pal. They form a network linking the inner and outer membranes and the peptidoglycan layer.

The protein localises to the periplasm. Functionally, part of the Tol-Pal system, which plays a role in outer membrane invagination during cell division and is important for maintaining outer membrane integrity. In Pseudomonas fluorescens (strain SBW25), this protein is Tol-Pal system protein TolB.